A 150-amino-acid chain; its full sequence is MTTENRPAKIIEAHEIMTLLPHRYPFLLVDRVVDFEEGQWLKAYKNISVNEPCFTGHFPGQPILPGVLILEALAQSMGLLAFKTHEIKGGELFYFAGIDDARFKRPVLPGDRLELFVEVIKERRGITSFTGVASVDGEVACEAKLMCARR.

His57 is a catalytic residue.

It belongs to the thioester dehydratase family. FabZ subfamily.

It is found in the cytoplasm. The enzyme catalyses a (3R)-hydroxyacyl-[ACP] = a (2E)-enoyl-[ACP] + H2O. Involved in unsaturated fatty acids biosynthesis. Catalyzes the dehydration of short chain beta-hydroxyacyl-ACPs and long chain saturated and unsaturated beta-hydroxyacyl-ACPs. The protein is 3-hydroxyacyl-[acyl-carrier-protein] dehydratase FabZ of Mannheimia succiniciproducens (strain KCTC 0769BP / MBEL55E).